The primary structure comprises 355 residues: MKLDDFDFDLPDGLIATRPARPRSSARLLVADGPETHDLTVADLPSMLRRGDRLVLNDTRVIPARLTGTRTRMSAQGEVTARIEVTLMEPQADGTWSALAKPMRKLKAGEKIIFSNALQADVHAMDEGLRLAFNVEGDDFDAALNAAGAMPLPPYIAGKRAPDARDYHDYQTIWAKRAGAVAAPTASLHFDEHLMDALTSRGVDVTFVTLHVGAGTFLPVTVDDVTTHKMHAEWGEVRATAAAEINATKAAGGRIIPVGTTALRLIESAAQDGTIHPFEGTTDIFIYPGYRWQITDALMTNFHLPKSTLLMLVSALMGKDRMDAVYAHAIANQYRFFSYGDASLLFPSQKGQTSR.

Belongs to the QueA family. In terms of assembly, monomer.

It is found in the cytoplasm. It catalyses the reaction 7-aminomethyl-7-carbaguanosine(34) in tRNA + S-adenosyl-L-methionine = epoxyqueuosine(34) in tRNA + adenine + L-methionine + 2 H(+). It participates in tRNA modification; tRNA-queuosine biosynthesis. In terms of biological role, transfers and isomerizes the ribose moiety from AdoMet to the 7-aminomethyl group of 7-deazaguanine (preQ1-tRNA) to give epoxyqueuosine (oQ-tRNA). In Jannaschia sp. (strain CCS1), this protein is S-adenosylmethionine:tRNA ribosyltransferase-isomerase.